Here is an 879-residue protein sequence, read N- to C-terminus: Levansucrase (879 aa).

An N-terminal signal peptide occupies residues 1-37 (MTKEHKKMYKAGKYWAVATLVSASILMEVGVTTHADA). A run of 7 repeats spans residues 66–81 (DNAT…SIAN), 82–97 (DNAT…SIAN), 98–113 (DNAT…SIAN), 114–129 (DNAT…SVAN), 130–145 (DNAT…SVAN), 146–161 (DNAT…SVAN), and 162–177 (DNAT…SVAN). Residues 66–177 (DNATSGSTKQ…STKQESSVAN (112 aa)) are 7 X 16 AA tandem repeats of D-N-A-T-S-G-S-T-K-Q-E-S-S-[IV]-A-N. Polar residues-rich tracts occupy residues 66–180 (DNAT…NDTK) and 189–213 (NTSN…AATQ). Positions 66–213 (DNATSGSTKQ…NNEQPSAATQ (148 aa)) are disordered. Sucrose-binding residues include Trp-311, Asp-312, and Ser-382. Asp-312 functions as the Nucleophile in the catalytic mechanism. Asp-460 lines the Ca(2+) pocket. Sucrose is bound by residues Arg-465 and Asp-466. 4 residues coordinate Ca(2+): Gln-491, Leu-528, Asn-530, and Asp-562. Glu-563 contributes to the sucrose binding site. The active-site Proton donor/acceptor is Glu-565. Residue Arg-583 coordinates sucrose. Residues 743–830 (SSGLGLKPHQ…TPAKPVQAGQ (88 aa)) form a disordered region. Over residues 754 to 821 (VNPSQPTTPA…KPVNPSQPTT (68 aa)) the composition is skewed to polar residues. The LPXTG sorting signal motif lies at 841 to 845 (LPQTG). Thr-844 carries the pentaglycyl murein peptidoglycan amidated threonine modification. A propeptide spans 845–879 (GENNSQSQTMSFIGILLAMFGSLLGFLGIKKRRND) (removed by sortase).

The protein belongs to the glycosyl hydrolase 68 family.

It is found in the secreted. Its subcellular location is the cell wall. It catalyses the reaction [6)-beta-D-fructofuranosyl-(2-&gt;](n) alpha-D-glucopyranoside + sucrose = [6)-beta-D-fructofuranosyl-(2-&gt;](n+1) alpha-D-glucopyranoside + D-glucose. With respect to regulation, ca(2+) may play an important structural role and promote stability of levansucrase. In terms of biological role, fructosyltransferase that catalyzes the polymerization of the fructose moiety of sucrose to produce levan polymer and the fructo-oligosaccharide (FOS) 1-kestose. Also displays sucrose hydrolase activity. This Fructilactobacillus sanfranciscensis (Lactobacillus sanfranciscensis) protein is Levansucrase.